The sequence spans 367 residues: S-adenosylmethionine:tRNA ribosyltransferase-isomerase (367 aa).

The tract at residues 150–182 is disordered; that stretch reads RHGEEEESSDEAISSQNPEIATESKRTPSNDDK. Over residues 171–182 the composition is skewed to basic and acidic residues; that stretch reads TESKRTPSNDDK.

The protein belongs to the QueA family. Monomer.

Its subcellular location is the cytoplasm. It carries out the reaction 7-aminomethyl-7-carbaguanosine(34) in tRNA + S-adenosyl-L-methionine = epoxyqueuosine(34) in tRNA + adenine + L-methionine + 2 H(+). It functions in the pathway tRNA modification; tRNA-queuosine biosynthesis. Functionally, transfers and isomerizes the ribose moiety from AdoMet to the 7-aminomethyl group of 7-deazaguanine (preQ1-tRNA) to give epoxyqueuosine (oQ-tRNA). The chain is S-adenosylmethionine:tRNA ribosyltransferase-isomerase from Rickettsia felis (strain ATCC VR-1525 / URRWXCal2) (Rickettsia azadi).